A 160-amino-acid polypeptide reads, in one-letter code: Serine-protein kinase RsbW (160 aa).

Belongs to the anti-sigma-factor family.

The catalysed reaction is L-seryl-[protein] + ATP = O-phospho-L-seryl-[protein] + ADP + H(+). The enzyme catalyses L-threonyl-[protein] + ATP = O-phospho-L-threonyl-[protein] + ADP + H(+). In terms of biological role, negative regulator of sigma-B activity. Phosphorylates and inactivates its specific antagonist protein, RsbV. Upon phosphorylation of RsbV, RsbW is released and binds to sigma-B, thereby blocking its ability to form an RNA polymerase holoenzyme (E-sigma-B). The protein is Serine-protein kinase RsbW of Bacillus mycoides (strain KBAB4) (Bacillus weihenstephanensis).